The sequence spans 838 residues: AP-4 complex subunit beta (838 aa).

Residues 582 to 673 are hinge; the sequence is NSSKQTTSIN…NQNNNQNNNQ (92 aa). A disordered region spans residues 648–683; that stretch reads ITDGNQNNNQNNNQNNNQNNNQNNNQNNQNNNNQNN. Over residues 652 to 683 the composition is skewed to low complexity; the sequence is NQNNNQNNNQNNNQNNNQNNNQNNQNNNNQNN. The interval 674–838 is ear; that stretch reads NNQNNNNQNN…LSIPIPKIFN (165 aa).

This sequence belongs to the adaptor complexes large subunit family. May be part of the adaptor protein complex 4 (AP-4), a heterotetramer composed of two large adaptins (epsilon-type subunitand beta-type subunit), a medium adaptin (mu-type subunit) and a small adaptin (sigma-type).

Its subcellular location is the golgi apparatus. The protein localises to the trans-Golgi network membrane. Its function is as follows. Probable component of an adaptor protein complex. Adaptor protein complexes are vesicle coat components involved both in vesicle formation and cargo selection. They control the vesicular transport of proteins in different trafficking pathways. The protein is AP-4 complex subunit beta (ap4b1) of Dictyostelium discoideum (Social amoeba).